We begin with the raw amino-acid sequence, 336 residues long: F420-dependent glucose-6-phosphate dehydrogenase (336 aa).

Asp39 contacts coenzyme F420-(gamma-Glu)n. Residue His40 is the Proton donor of the active site. Coenzyme F420-(gamma-Glu)n-binding positions include Thr76 and 107–108 (TG). Residue Glu109 is the Proton acceptor of the active site. Coenzyme F420-(gamma-Glu)n-binding positions include Asn112, 177-178 (GG), and 180-181 (VV). Residues Thr195, Lys198, Lys259, and Arg283 each contribute to the substrate site.

Belongs to the F420-dependent glucose-6-phosphate dehydrogenase family. Homodimer.

The enzyme catalyses oxidized coenzyme F420-(gamma-L-Glu)(n) + D-glucose 6-phosphate + H(+) = 6-phospho-D-glucono-1,5-lactone + reduced coenzyme F420-(gamma-L-Glu)(n). Functionally, catalyzes the coenzyme F420-dependent oxidation of glucose 6-phosphate (G6P) to 6-phosphogluconolactone. Appears to have a role in resistance to oxidative stress, via its consumption of G6P that serves as a source of reducing power to combat oxidative stress in mycobacteria. Cannot use NAD, NADP, FAD or FMN instead of coenzyme F420 as an electron acceptor. Exhibits nearly no activity with D-mannose-6-phosphate or D-fructose-6-phosphate as substrate. This is F420-dependent glucose-6-phosphate dehydrogenase (fgd) from Mycolicibacterium smegmatis (strain ATCC 700084 / mc(2)155) (Mycobacterium smegmatis).